Reading from the N-terminus, the 537-residue chain is CTP synthase (537 aa).

The segment at 1–268 (MGETKYIFVT…DSTILEKMGL (268 aa)) is amidoligase domain. Position 15 (S15) interacts with CTP. S15 serves as a coordination point for UTP. An ATP-binding site is contributed by 16-21 (SLGKGI). Position 56 (Y56) interacts with L-glutamine. D73 serves as a coordination point for ATP. Mg(2+) contacts are provided by D73 and E143. CTP is bound by residues 150 to 152 (DIE), 189 to 194 (KTKPTQ), and K225. Residues 189–194 (KTKPTQ) and K225 contribute to the UTP site. One can recognise a Glutamine amidotransferase type-1 domain in the interval 296 to 537 (NIALVGKYDL…VKAAIENEKN (242 aa)). G357 is a binding site for L-glutamine. C384 acts as the Nucleophile; for glutamine hydrolysis in catalysis. L-glutamine-binding positions include 385-388 (LGMQ), E408, and R465. Active-site residues include H510 and E512.

The protein belongs to the CTP synthase family. Homotetramer.

It catalyses the reaction UTP + L-glutamine + ATP + H2O = CTP + L-glutamate + ADP + phosphate + 2 H(+). It carries out the reaction L-glutamine + H2O = L-glutamate + NH4(+). The enzyme catalyses UTP + NH4(+) + ATP = CTP + ADP + phosphate + 2 H(+). The protein operates within pyrimidine metabolism; CTP biosynthesis via de novo pathway; CTP from UDP: step 2/2. With respect to regulation, allosterically activated by GTP, when glutamine is the substrate; GTP has no effect on the reaction when ammonia is the substrate. The allosteric effector GTP functions by stabilizing the protein conformation that binds the tetrahedral intermediate(s) formed during glutamine hydrolysis. Inhibited by the product CTP, via allosteric rather than competitive inhibition. Functionally, catalyzes the ATP-dependent amination of UTP to CTP with either L-glutamine or ammonia as the source of nitrogen. Regulates intracellular CTP levels through interactions with the four ribonucleotide triphosphates. This chain is CTP synthase, found in Bacteroides thetaiotaomicron (strain ATCC 29148 / DSM 2079 / JCM 5827 / CCUG 10774 / NCTC 10582 / VPI-5482 / E50).